The chain runs to 513 residues: ATP synthase subunit alpha (513 aa).

169 to 176 (GDRQCGKT) contributes to the ATP binding site.

It belongs to the ATPase alpha/beta chains family. As to quaternary structure, F-type ATPases have 2 components, CF(1) - the catalytic core - and CF(0) - the membrane proton channel. CF(1) has five subunits: alpha(3), beta(3), gamma(1), delta(1), epsilon(1). CF(0) has three main subunits: a(1), b(2) and c(9-12). The alpha and beta chains form an alternating ring which encloses part of the gamma chain. CF(1) is attached to CF(0) by a central stalk formed by the gamma and epsilon chains, while a peripheral stalk is formed by the delta and b chains.

Its subcellular location is the cell inner membrane. It catalyses the reaction ATP + H2O + 4 H(+)(in) = ADP + phosphate + 5 H(+)(out). Its function is as follows. Produces ATP from ADP in the presence of a proton gradient across the membrane. The alpha chain is a regulatory subunit. This chain is ATP synthase subunit alpha, found in Burkholderia vietnamiensis (strain G4 / LMG 22486) (Burkholderia cepacia (strain R1808)).